The chain runs to 590 residues: Glutathione S-transferase T3 (590 aa).

The region spanning 1–82 (MKLKVYADRM…YLSSAYPSVV (82 aa)) is the GST N-terminal domain. Glutathione contacts are provided by residues 11–12 (SQ), 40–41 (QL), 53–54 (KV), and 66–67 (ES). The GST C-terminal domain occupies 89 to 232 (DLSKRARIHS…KDRCQKQREM (144 aa)). The region spanning 265 to 336 (DRRKHRRKWS…HCKQRWSKLN (72 aa)) is the Myb-like domain. Residues 402 to 427 (SKGGGSSKRTKLNNGDRVYSSSSNPE) are disordered.

Belongs to the GST superfamily. Theta family.

It is found in the nucleus. It catalyses the reaction RX + glutathione = an S-substituted glutathione + a halide anion + H(+). May be involved in the conjugation of reduced glutathione to a wide number of exogenous and endogenous hydrophobic electrophiles and have a detoxification role against certain herbicides. The polypeptide is Glutathione S-transferase T3 (GSTT3) (Arabidopsis thaliana (Mouse-ear cress)).